The chain runs to 508 residues: Dihydroniloticin synthase CYP71CD4 (508 aa).

Residues 6–26 (LDFFSVTSFIIFFLFLFRLVW) traverse the membrane as a helical segment. Cys449 provides a ligand contact to heme.

It belongs to the cytochrome P450 family. It depends on heme as a cofactor. Mainly expressed in roots and, to a lesser extent, in stems.

Its subcellular location is the membrane. It catalyses the reaction tirucalla-7,24-dien-3beta-ol + 2 reduced [NADPH--hemoprotein reductase] + 2 O2 = dihydroniloticin + 2 oxidized [NADPH--hemoprotein reductase] + 2 H2O + 2 H(+). It functions in the pathway secondary metabolite biosynthesis; terpenoid biosynthesis. Its function is as follows. Monooxygenase involved in the biosynthesis of quassinoids triterpene natural products such as ailanthone, chaparrinone, glaucarubinone and amarolide, allelopathic degraded triterpene lactones inhibiting the growth of other plants, and possessing antimalarial, antifeedant, insecticidal, anti-inflammatory and anticancer activities. Catalyzes the conversion of tirucalladienol to dihydroniloticin. This Ailanthus altissima (Tree-of-heaven) protein is Dihydroniloticin synthase CYP71CD4.